We begin with the raw amino-acid sequence, 539 residues long: CTP synthase (539 aa).

The segment at 1–267 (MKEAKFIFVT…GTQVLEHFHL (267 aa)) is amidoligase domain. Residue Ser-15 coordinates CTP. UTP is bound at residue Ser-15. ATP-binding positions include 16–21 (SLGKGL) and Asp-73. Asp-73 and Glu-141 together coordinate Mg(2+). CTP-binding positions include 148–150 (DIE), 188–193 (KTKPTQ), and Lys-224. Residues 188-193 (KTKPTQ) and Lys-224 each bind UTP. A Glutamine amidotransferase type-1 domain is found at 292–536 (TVSIVGKYTE…IKAVVNKVKK (245 aa)). Gly-359 is an L-glutamine binding site. The active-site Nucleophile; for glutamine hydrolysis is Cys-386. L-glutamine-binding positions include 387 to 390 (LGMQ), Glu-410, and Arg-464. Residues His-509 and Glu-511 contribute to the active site.

This sequence belongs to the CTP synthase family. Homotetramer.

The enzyme catalyses UTP + L-glutamine + ATP + H2O = CTP + L-glutamate + ADP + phosphate + 2 H(+). It catalyses the reaction L-glutamine + H2O = L-glutamate + NH4(+). The catalysed reaction is UTP + NH4(+) + ATP = CTP + ADP + phosphate + 2 H(+). Its pathway is pyrimidine metabolism; CTP biosynthesis via de novo pathway; CTP from UDP: step 2/2. With respect to regulation, allosterically activated by GTP, when glutamine is the substrate; GTP has no effect on the reaction when ammonia is the substrate. The allosteric effector GTP functions by stabilizing the protein conformation that binds the tetrahedral intermediate(s) formed during glutamine hydrolysis. Inhibited by the product CTP, via allosteric rather than competitive inhibition. In terms of biological role, catalyzes the ATP-dependent amination of UTP to CTP with either L-glutamine or ammonia as the source of nitrogen. Regulates intracellular CTP levels through interactions with the four ribonucleotide triphosphates. The sequence is that of CTP synthase from Wolbachia sp. subsp. Brugia malayi (strain TRS).